A 619-amino-acid polypeptide reads, in one-letter code: Dihydroxy-acid dehydratase (619 aa).

Asp-81 provides a ligand contact to Mg(2+). Cys-122 serves as a coordination point for [2Fe-2S] cluster. Positions 123 and 124 each coordinate Mg(2+). An N6-carboxylysine modification is found at Lys-124. Residue Cys-195 participates in [2Fe-2S] cluster binding. Glu-491 is a binding site for Mg(2+). Catalysis depends on Ser-517, which acts as the Proton acceptor.

This sequence belongs to the IlvD/Edd family. As to quaternary structure, homodimer. [2Fe-2S] cluster is required as a cofactor. It depends on Mg(2+) as a cofactor.

The catalysed reaction is (2R)-2,3-dihydroxy-3-methylbutanoate = 3-methyl-2-oxobutanoate + H2O. It carries out the reaction (2R,3R)-2,3-dihydroxy-3-methylpentanoate = (S)-3-methyl-2-oxopentanoate + H2O. Its pathway is amino-acid biosynthesis; L-isoleucine biosynthesis; L-isoleucine from 2-oxobutanoate: step 3/4. It functions in the pathway amino-acid biosynthesis; L-valine biosynthesis; L-valine from pyruvate: step 3/4. Functionally, functions in the biosynthesis of branched-chain amino acids. Catalyzes the dehydration of (2R,3R)-2,3-dihydroxy-3-methylpentanoate (2,3-dihydroxy-3-methylvalerate) into 2-oxo-3-methylpentanoate (2-oxo-3-methylvalerate) and of (2R)-2,3-dihydroxy-3-methylbutanoate (2,3-dihydroxyisovalerate) into 2-oxo-3-methylbutanoate (2-oxoisovalerate), the penultimate precursor to L-isoleucine and L-valine, respectively. The protein is Dihydroxy-acid dehydratase of Sphingopyxis alaskensis (strain DSM 13593 / LMG 18877 / RB2256) (Sphingomonas alaskensis).